Here is a 188-residue protein sequence, read N- to C-terminus: Large ribosomal subunit protein eL18z (188 aa).

This sequence belongs to the eukaryotic ribosomal protein eL18 family.

The chain is Large ribosomal subunit protein eL18z (RPL18A) from Arabidopsis thaliana (Mouse-ear cress).